A 134-amino-acid polypeptide reads, in one-letter code: Small ribosomal subunit protein uS8c (134 aa).

It belongs to the universal ribosomal protein uS8 family. Part of the 30S ribosomal subunit.

It localises to the plastid. The protein localises to the chloroplast. One of the primary rRNA binding proteins, it binds directly to 16S rRNA central domain where it helps coordinate assembly of the platform of the 30S subunit. The protein is Small ribosomal subunit protein uS8c (rps8) of Gossypium barbadense (Sea Island cotton).